A 176-amino-acid polypeptide reads, in one-letter code: uncharacterized protein (176 aa).

This is an uncharacterized protein from Aquifex aeolicus (strain VF5).